Here is a 76-residue protein sequence, read N- to C-terminus: UPF0235 protein MMAR_2910 (76 aa).

The protein belongs to the UPF0235 family.

In Mycobacterium marinum (strain ATCC BAA-535 / M), this protein is UPF0235 protein MMAR_2910.